Here is a 660-residue protein sequence, read N- to C-terminus: MTDRIVPATLVFREDGTVVSPLYGDIYHSAAGALAQADHVFIRGNGLPERWRHERAFTIIETGFGTGCNFLATWAAWRADPSHCERLHFVSVEKHPFAREDLRRAAAHIVAYTTITTITPIAPLVDELANAWPALTPGVHRLEFDDGRVTLTLVFGDALDVLPNLALRAHAFYLDGFAPSKNADLWSPAIFKSLAKLADERATFATYTSSGAVKRALDEAGFAYRKVDGFAGKRAMLVGEFAPRWRVRRHEPPRAFSTDRRDAIVIGAGLAGCAVVERLAARGWHVTLIERRERIASEASGNPAGVFHPMIARDDNLAARLSRAGFLHALHRWRALERAGHAFSRSTHGLVQLATSDDEFERMRESIDALGVPAELASALSRDDARALLRTDVAHGGWLFAQGGSISPAALAAAQCAAAGDRLSRIVGVEIARLERGGDGRWRALDASGATIAQASVVVVANAADAARIAGLRHAPTQRVRGQLTLLPPGSAPAVPLPVIGDGYVVPLANGVTLTGATYEPDDTDATPREAGHRENLERLERLLPAFSANALDAGALAGRVGFRCVASDRLPLVGELGDEAAAAREAAALTGARLRDVPRATGLYGAFGYGSRGLVWATLGAELIAAQIDGEPWPLERELAEAIDPARFLVRALRHGRVA.

Residues 1–242 (MTDRIVPATL…KRAMLVGEFA (242 aa)) form a tRNA (mnm(5)s(2)U34)-methyltransferase region. The segment at 266–660 (IGAGLAGCAV…VRALRHGRVA (395 aa)) is FAD-dependent cmnm(5)s(2)U34 oxidoreductase.

It in the N-terminal section; belongs to the methyltransferase superfamily. tRNA (mnm(5)s(2)U34)-methyltransferase family. In the C-terminal section; belongs to the DAO family. FAD is required as a cofactor.

It is found in the cytoplasm. The catalysed reaction is 5-aminomethyl-2-thiouridine(34) in tRNA + S-adenosyl-L-methionine = 5-methylaminomethyl-2-thiouridine(34) in tRNA + S-adenosyl-L-homocysteine + H(+). Functionally, catalyzes the last two steps in the biosynthesis of 5-methylaminomethyl-2-thiouridine (mnm(5)s(2)U) at the wobble position (U34) in tRNA. Catalyzes the FAD-dependent demodification of cmnm(5)s(2)U34 to nm(5)s(2)U34, followed by the transfer of a methyl group from S-adenosyl-L-methionine to nm(5)s(2)U34, to form mnm(5)s(2)U34. This is tRNA 5-methylaminomethyl-2-thiouridine biosynthesis bifunctional protein MnmC from Burkholderia pseudomallei (strain 1710b).